The chain runs to 317 residues: MDFEASAKILTTPVKGAKIVSNMTVDELVREYAGCAFGAGRLAKAVDIYYEMLASEKTTKFFGLAGAMTPAGMRNIIADLIRDGYIDVLVTTGANMVHDTVEALGLHHYKGSDCTNDIQLRHECIDRIYDVYLPDQHFTDLEEFLQGVYAGLPQEKLSIRQVLTEIGKNLDDDSSILKTAAEMGVPVYCPALQDSVIGLQAWLYKEGNPLHVDAFADMHEFMEICFETESAGAMLLGGGVPKNYILQSMLVTPRSFDYAIQLTMDHPETGGLSGATLDEAQSWGKVGENAKSVTVYADSTITLPLIVSAVRTRLSKR.

Residue Lys285 is the Nucleophile of the active site.

Belongs to the deoxyhypusine synthase family. Requires NAD(+) as cofactor.

The enzyme catalyses [eIF5A protein]-L-lysine + spermidine = [eIF5A protein]-deoxyhypusine + propane-1,3-diamine. Its pathway is protein modification; eIF5A hypusination. In terms of biological role, catalyzes the NAD-dependent oxidative cleavage of spermidine and the subsequent transfer of the butylamine moiety of spermidine to the epsilon-amino group of a specific lysine residue of the eIF-5A precursor protein to form the intermediate deoxyhypusine residue. The polypeptide is Probable deoxyhypusine synthase (dys) (Methanosarcina thermophila).